Here is a 498-residue protein sequence, read N- to C-terminus: ATP synthase subunit beta, chloroplastic (498 aa).

ATP is bound at residue 172 to 179 (GGAGVGKT).

It belongs to the ATPase alpha/beta chains family. As to quaternary structure, F-type ATPases have 2 components, CF(1) - the catalytic core - and CF(0) - the membrane proton channel. CF(1) has five subunits: alpha(3), beta(3), gamma(1), delta(1), epsilon(1). CF(0) has four main subunits: a(1), b(1), b'(1) and c(9-12).

The protein localises to the plastid. Its subcellular location is the chloroplast thylakoid membrane. It carries out the reaction ATP + H2O + 4 H(+)(in) = ADP + phosphate + 5 H(+)(out). Its function is as follows. Produces ATP from ADP in the presence of a proton gradient across the membrane. The catalytic sites are hosted primarily by the beta subunits. The protein is ATP synthase subunit beta, chloroplastic of Idiospermum australiense (Ribbonwood tree).